A 101-amino-acid chain; its full sequence is Small ribosomal subunit protein uS14 (101 aa).

This sequence belongs to the universal ribosomal protein uS14 family. As to quaternary structure, part of the 30S ribosomal subunit. Contacts proteins S3 and S10.

Functionally, binds 16S rRNA, required for the assembly of 30S particles and may also be responsible for determining the conformation of the 16S rRNA at the A site. This Actinobacillus pleuropneumoniae serotype 3 (strain JL03) protein is Small ribosomal subunit protein uS14.